A 385-amino-acid chain; its full sequence is tRNA-specific 2-thiouridylase MnmA (385 aa).

ATP-binding positions include 18-25 and L44; that span reads AMSGGVDS. C112 acts as the Nucleophile in catalysis. The cysteines at positions 112 and 209 are disulfide-linked. G136 contributes to the ATP binding site. The interval 159-161 is interaction with tRNA; that stretch reads RDQ. C209 acts as the Cysteine persulfide intermediate in catalysis.

Belongs to the MnmA/TRMU family.

Its subcellular location is the cytoplasm. The catalysed reaction is S-sulfanyl-L-cysteinyl-[protein] + uridine(34) in tRNA + AH2 + ATP = 2-thiouridine(34) in tRNA + L-cysteinyl-[protein] + A + AMP + diphosphate + H(+). Catalyzes the 2-thiolation of uridine at the wobble position (U34) of tRNA, leading to the formation of s(2)U34. The chain is tRNA-specific 2-thiouridylase MnmA from Methylorubrum extorquens (strain PA1) (Methylobacterium extorquens).